A 138-amino-acid chain; its full sequence is Acidic phospholipase A2 DsM-a2/DsM-a2' (138 aa).

The first 16 residues, 1–16 (MRTLWIVAVCLIGVEG), serve as a signal peptide directing secretion. Disulfide bonds link Cys-42-Cys-131, Cys-44-Cys-60, Cys-59-Cys-111, Cys-65-Cys-138, Cys-66-Cys-104, Cys-73-Cys-97, and Cys-91-Cys-102. Ca(2+)-binding residues include Tyr-43, Gly-45, and Gly-47. His-63 is an active-site residue. Position 64 (Asp-64) interacts with Ca(2+). Asp-105 is a catalytic residue.

This sequence belongs to the phospholipase A2 family. Group II subfamily. D49 sub-subfamily. It depends on Ca(2+) as a cofactor. In terms of tissue distribution, expressed by the venom gland.

It localises to the secreted. It carries out the reaction a 1,2-diacyl-sn-glycero-3-phosphocholine + H2O = a 1-acyl-sn-glycero-3-phosphocholine + a fatty acid + H(+). Functionally, exhibits high hydrolytic activities and shows strong preference for the anionic micelles (dPPC with deoxycholate) to the zwitterionic micelles (dPPC with Triton X-100). PLA2 catalyzes the calcium-dependent hydrolysis of the 2-acyl groups in 3-sn-phosphoglycerides. This is Acidic phospholipase A2 DsM-a2/DsM-a2' from Daboia siamensis (Eastern Russel's viper).